The sequence spans 2161 residues: Voltage-dependent L-type calcium channel subunit alpha-1D (2161 aa).

Disordered stretches follow at residues 1–21, 30–49, and 64–100; these read MMMMMMMKKMQHQRQQQADHA, TRLPLSGEGPTSQPNSSKQT, and KAAQTMSTSAPPPVGSLSQRKRQQYAKSKKQGNSSNS. Topologically, residues 1–126 are cytoplasmic; sequence MMMMMMMKKM…RACISIVEWK (126 aa). The segment covering 38-49 has biased composition (polar residues); the sequence is GPTSQPNSSKQT. The segment covering 82–93 has biased composition (basic residues); the sequence is QRKRQQYAKSKK. The stretch at 113-409 is one I repeat; it reads NPIRRACISI…LVLGVLSGEF (297 aa). The chain crosses the membrane as a helical span at residues 127–145; the sequence is PFDIFILLAIFANCVALAI. The Extracellular segment spans residues 146–163; that stretch reads YIPFPEDDSNSTNHNLEK. A glycan (N-linked (GlcNAc...) asparagine) is linked at Asn-155. A helical membrane pass occupies residues 164 to 183; sequence VEYAFLIIFTVETFLKIIAY. The Cytoplasmic portion of the chain corresponds to 184–195; it reads GLLLHPNAYVRN. Residues 196–214 form a helical membrane-spanning segment; sequence GWNLLDFVIVIVGLFSVIL. The Extracellular segment spans residues 215–235; the sequence is EQLTKETEGGNHSSGKSGGFD. An N-linked (GlcNAc...) asparagine glycan is attached at Asn-225. Residues 236-254 form a helical membrane-spanning segment; that stretch reads VKALRAFRVLRPLRLVSGV. Topologically, residues 255–273 are cytoplasmic; the sequence is PSLQVVLNSIIKAMVPLLH. The helical transmembrane segment at 274-293 threads the bilayer; it reads IALLVLFVIIIYAIIGLELF. Topologically, residues 294 to 381 are extracellular; the sequence is IGKMHKTCFF…WMNDAMGFEL (88 aa). A glycan (N-linked (GlcNAc...) asparagine) is linked at Asn-329. Glu-364 is a binding site for Ca(2+). Residues 382–406 form a helical membrane-spanning segment; the sequence is PWVYFVSLVIFGSFFVLNLVLGVLS. Topologically, residues 407-523 are cytoplasmic; that stretch reads GEFSKEREKA…RRCRAAVKSV (117 aa). A binding to the beta subunit region spans residues 429 to 446; it reads QQLEEDLKGYLDWITQAE. The interval 449-482 is disordered; it reads DPENEEEGGEEGKRNTSMPTSETESVNTENVSGE. The segment covering 463-479 has biased composition (polar residues); sequence NTSMPTSETESVNTENV. The II repeat unit spans residues 509 to 755; the sequence is NRFNRRRCRA…VFLAIAVDNL (247 aa). Residues 524 to 543 form a helical membrane-spanning segment; that stretch reads TFYWLVIVLVFLNTLTISSE. Residues 544–558 lie on the Extracellular side of the membrane; sequence HYNQPDWLTQIQDIA. The chain crosses the membrane as a helical span at residues 559-577; it reads NKVLLALFTCEMLVKMYSL. The Cytoplasmic segment spans residues 578 to 585; that stretch reads GLQAYFVS. The chain crosses the membrane as a helical span at residues 586 to 604; that stretch reads LFNRFDCFVVCGGITETIL. The Extracellular segment spans residues 605-614; the sequence is VELEIMSPLG. A helical membrane pass occupies residues 615 to 633; that stretch reads ISVFRCVRLLRIFKVTRHW. At 634–652 the chain is on the cytoplasmic side; the sequence is TSLSNLVASLLNSMKSIAS. A helical transmembrane segment spans residues 653–673; the sequence is LLLLLFLFIIIFSLLGMQLFG. Residues 674 to 727 lie on the Extracellular side of the membrane; sequence GKFNFDETQTKRSTFDNFPQALLTVFQILTGEDWNAVMYDGIMAYGGPSSSGMI. Residue Glu-705 coordinates Ca(2+). A helical membrane pass occupies residues 728–752; that stretch reads VCIYFIILFICGNYILLNVFLAIAV. Topologically, residues 753 to 886 are cytoplasmic; sequence DNLADAESLN…VGCHKLINHH (134 aa). Over residues 766 to 790 the composition is skewed to basic and acidic residues; the sequence is KEEAEEKERKKIARKESLENKKNNK. The interval 766-850 is disordered; it reads KEEAEEKERK…AGPRPRRISE (85 aa). Residues 791–802 show a composition bias toward polar residues; it reads PEVNQIANSDNK. A compositionally biased stretch (acidic residues) spans 825–838; the sequence is VGEEEEEEEEDEPE. Residues 873–1155 form an III repeat; it reads NPIRVGCHKL…IFVGFVIVTF (283 aa). A helical transmembrane segment spans residues 887–905; that stretch reads IFTNLILVFIMLSSAALAA. Topologically, residues 906-921 are extracellular; it reads EDPIRSHSFRNTILGY. A helical membrane pass occupies residues 922-941; sequence FDYAFTAIFTVEILLKMTTF. Residues 942–953 are Cytoplasmic-facing; sequence GAFLHKGAFCRN. The helical transmembrane segment at 954-972 threads the bilayer; that stretch reads YFNLLDMLVVGVSLVSFGI. Residues 973–978 lie on the Extracellular side of the membrane; the sequence is QSSAIS. The helical transmembrane segment at 979 to 998 threads the bilayer; that stretch reads VVKILRVLRVLRPLRAINRA. Topologically, residues 999–1017 are cytoplasmic; it reads KGLKHVVQCVFVAIRTIGN. Residues 1018 to 1037 form a helical membrane-spanning segment; sequence IMIVTTLLQFMFACIGVQLF. The Extracellular portion of the chain corresponds to 1038–1127; that stretch reads KGKFYRCTDE…IGPIYNHRVE (90 aa). The tract at residues 1075–1165 is dihydropyridine binding; sequence RIWQNSDFNF…QEQGEKEYKN (91 aa). Glu-1101 provides a ligand contact to Ca(2+). The helical transmembrane segment at 1128–1148 threads the bilayer; the sequence is ISIFFIIYIIIVAFFMMNIFV. The Cytoplasmic portion of the chain corresponds to 1149-1205; sequence GFVIVTFQEQGEKEYKNCELDKNQRQCVEYALKARPLRRYIPKNPYQYKFWYVVNSS. One copy of the IV repeat lies at 1192-1467; the sequence is NPYQYKFWYV…LFVAVIMDNF (276 aa). A helical membrane pass occupies residues 1206-1224; the sequence is PFEYMMFVLIMLNTLCLAM. Residues 1225–1239 lie on the Extracellular side of the membrane; it reads QHYEQSKMFNDAMDI. A helical membrane pass occupies residues 1240-1259; sequence LNMVFTGVFTVEMVLKVIAF. Over 1260–1266 the chain is Cytoplasmic; the sequence is KPKGYFS. Residues 1267–1288 form a helical membrane-spanning segment; sequence DAWNTFDSLIVIGSIIDVALSE. The Extracellular portion of the chain corresponds to 1289-1313; the sequence is ADPTESENVPVPTATPGNSEESNRI. Residues 1314–1333 form a helical membrane-spanning segment; sequence SITFFRLFRVMRLVKLLSRG. The Cytoplasmic portion of the chain corresponds to 1334–1352; sequence EGIRTLLWTFIKSFQALPY. A helical membrane pass occupies residues 1353–1372; the sequence is VALLIAMLFFIYAVIGMQMF. At 1373 to 1439 the chain is on the extracellular side; the sequence is GKVAMRDNNQ…GEEYTCGSNF (67 aa). Residues 1420–1486 are dihydropyridine binding; sequence LCDPESDYNP…LGPHHLDEFK (67 aa). Residues 1432 to 1475 form a phenylalkylamine binding region; that stretch reads EYTCGSNFAIVYFISFYMLCAFLIINLFVAVIMDNFDYLTRDWS. Residues 1440-1464 form a helical membrane-spanning segment; it reads AIVYFISFYMLCAFLIINLFVAVIM. Topologically, residues 1465–2161 are cytoplasmic; the sequence is DNFDYLTRDW…ADEMICITTL (697 aa). Disordered regions lie at residues 1659–1678, 1684–1804, 1872–1919, and 2108–2152; these read SCDLQDDEPEETKREEEDDV, ALLG…VKRT, PGRN…ASHR, and NGNV…EDLA. Residues 1745–1763 are compositionally biased toward polar residues; that stretch reads SIGKQVPTSTNANLNNANM. Residues 1779–1797 are compositionally biased toward basic and acidic residues; that stretch reads HVSENGHHSSHKHDREPQR. Over residues 2138–2152 the composition is skewed to acidic residues; that stretch reads SDEEPDPGRDEEDLA.

The protein belongs to the calcium channel alpha-1 subunit (TC 1.A.1.11) family. CACNA1D subfamily. Voltage-dependent calcium channels are multisubunit complexes, consisting of alpha-1, alpha-2, beta and delta subunits in a 1:1:1:1 ratio. The channel activity is directed by the pore-forming and voltage-sensitive alpha-1 subunit. In many cases, this subunit is sufficient to generate voltage-sensitive calcium channel activity. The auxiliary subunits beta and alpha-2/delta linked by a disulfide bridge regulate the channel activity. Channel activity is further modulated, depending on the presence of specific delta subunit isoforms. Interacts (via IQ domain) with CABP1 and CABP4 in a calcium independent manner. Interacts with RIMBP2. As to expression, expressed in pancreatic islets and in brain, where it has been seen in cerebral cortex, hippocampus, basal ganglia, habenula and thalamus. Expressed in the small cell lung carcinoma cell line SCC-9. No expression in skeletal muscle.

It localises to the membrane. It catalyses the reaction Ca(2+)(in) = Ca(2+)(out). Functionally, voltage-sensitive calcium channels (VSCC) mediate the entry of calcium ions into excitable cells and are also involved in a variety of calcium-dependent processes, including muscle contraction, hormone or neurotransmitter release, gene expression, cell motility, cell division and cell death. The isoform alpha-1D gives rise to L-type calcium currents. Long-lasting (L-type) calcium channels belong to the 'high-voltage activated' (HVA) group. They are blocked by dihydropyridines (DHP), phenylalkylamines, and by benzothiazepines. In terms of biological role, voltage-sensitive calcium channels (VSCC) mediate the entry of calcium ions into excitable cells and are also involved in a variety of calcium-dependent processes, including muscle contraction, hormone or neurotransmitter release, gene expression, cell motility, cell division and cell death. The isoform alpha-1D gives rise to L-type calcium currents. This Homo sapiens (Human) protein is Voltage-dependent L-type calcium channel subunit alpha-1D (CACNA1D).